The primary structure comprises 686 residues: Proprotein convertase subtilisin/kexin type 9 (686 aa).

Positions 1–28 are cleaved as a signal peptide; the sequence is MGTVSSRRLWWPLPLLLLLLLGPAGTRA. Positions 29–150 are excised as a propeptide; that stretch reads QEDDDDDYEE…IEEDSSVFAQ (122 aa). The residue at position 36 (Tyr-36) is a Sulfotyrosine. At Ser-45 the chain carries Phosphoserine. The region spanning 75-147 is the Inhibitor I9 domain; sequence TYVVVLKEET…VDYIEEDSSV (73 aa). Residues 153-459 form the Peptidase S8 domain; the sequence is PWNLERITPA…GWQLFCRTVW (307 aa). Active-site charge relay system residues include Asp-184 and His-224. Disulfide bonds link Cys-221–Cys-253 and Cys-321–Cys-356. Ser-384 functions as the Charge relay system in the catalytic mechanism. Residues 448–686 form a C-terminal domain region; sequence GEGWQLFCRT…CRSQHLAQAS (239 aa). Disulfide bonds link Cys-455–Cys-525, Cys-475–Cys-524, and Cys-484–Cys-507. Asn-531 carries N-linked (GlcNAc...) asparagine glycosylation. 6 disulfides stabilise this stretch: Cys-532/Cys-599, Cys-550/Cys-598, Cys-560/Cys-586, Cys-606/Cys-677, Cys-624/Cys-676, and Cys-633/Cys-652. Ser-686 bears the Phosphoserine mark.

Belongs to the peptidase S8 family. In terms of assembly, monomer. Can self-associate to form dimers and higher multimers which may have increased LDLR degrading activity. The precursor protein but not the mature protein may form multimers. Interacts with APOB, VLDLR, LRP8/APOER2 and BACE1. The full-length immature form (pro-PCSK9) interacts with SCNN1A, SCNN1B and SCNN1G. The pro-PCSK9 form (via C-terminal domain) interacts with LDLR. Interacts (via the C-terminal domain) with ANXA2 (via repeat Annexin 1); the interaction inhibits the degradation of LDLR. It depends on Ca(2+) as a cofactor. Post-translationally, cleavage by furin and PCSK5 generates a truncated inactive protein that is unable to induce LDLR degradation. Undergoes autocatalytic cleavage in the endoplasmic reticulum to release the propeptide from the N-terminus and the cleavage of the propeptide is strictly required for its maturation and activation. The cleaved propeptide however remains associated with the catalytic domain through non-covalent interactions, preventing potential substrates from accessing its active site. As a result, it is secreted from cells as a propeptide-containing, enzymatically inactive protein. In terms of processing, phosphorylation protects the propeptide against proteolysis.

Its subcellular location is the cytoplasm. The protein localises to the secreted. The protein resides in the endosome. It is found in the lysosome. It localises to the cell surface. Its subcellular location is the endoplasmic reticulum. The protein localises to the golgi apparatus. Its proteolytic activity is autoinhibited by the non-covalent binding of the propeptide to the catalytic domain. Inhibited by EGTA. Crucial player in the regulation of plasma cholesterol homeostasis. Binds to low-density lipid receptor family members: low density lipoprotein receptor (LDLR), very low density lipoprotein receptor (VLDLR), apolipoprotein E receptor (LRP1/APOER) and apolipoprotein receptor 2 (LRP8/APOER2), and promotes their degradation in intracellular acidic compartments. Acts via a non-proteolytic mechanism to enhance the degradation of the hepatic LDLR through a clathrin LDLRAP1/ARH-mediated pathway. May prevent the recycling of LDLR from endosomes to the cell surface or direct it to lysosomes for degradation. Can induce ubiquitination of LDLR leading to its subsequent degradation. Inhibits intracellular degradation of APOB via the autophagosome/lysosome pathway in a LDLR-independent manner. Involved in the disposal of non-acetylated intermediates of BACE1 in the early secretory pathway. Inhibits epithelial Na(+) channel (ENaC)-mediated Na(+) absorption by reducing ENaC surface expression primarily by increasing its proteasomal degradation. Regulates neuronal apoptosis via modulation of LRP8/APOER2 levels and related anti-apoptotic signaling pathways. The polypeptide is Proprotein convertase subtilisin/kexin type 9 (PCSK9) (Saguinus labiatus (Red-chested mustached tamarin)).